The sequence spans 73 residues: Antimicrobial peptide TsAP-2 (73 aa).

Positions M1 to A22 are cleaved as a signal peptide. A Lysine amide modification is found at K39. Positions E45–Y73 are excised as a propeptide.

This sequence belongs to the non-disulfide-bridged peptide (NDBP) superfamily. Short antimicrobial peptide (group 4) family. Expressed by the venom gland.

It is found in the secreted. Antimicrobial peptide. Has a high antibacterial activity against the Gram-positive bacterium S.aureus (MIC=5-17.30 uM), the methicillin-resistant S.aureus (MRSA) (MIC=17.30 uM), and E.faecalis (MIC=69.23 uM). Has antifungal activity against Candida spp. and one Cryptococcus neoformans strains with MICs values ranging from 6.25 to 100 uM. Also shows an inhibitory activity on C.albicans biofilms at high concentrations. Has a moderate hemolytic potency (18% at 20 uM). Also inhibits the growth of the five human cancer cell lines tested (the squamous carcinoma cell line H157 (IC(50)=4.1 uM), the lung adenocarcinoma cell line H838 (11.0 uM), the breast carcinoma cell line MCF-7 (6.4 uM), the androgen-independent prostate adenocarcinoma cell line PC3 (13.3 uM) and the glioblastoma cell line U251-MG (15.4 uM)). In the model of polymicrobial sepsis, it exhibits an antibiotic effect, reducing the levels of microorganisms in the infectious focus and the inflammatory responses in the lung and cecum of septic animals. This chain is Antimicrobial peptide TsAP-2, found in Tityus serrulatus (Brazilian scorpion).